Consider the following 261-residue polypeptide: Glucosamine-6-phosphate deaminase (261 aa).

Asp67 (proton acceptor; for enolization step) is an active-site residue. Catalysis depends on Asn136, which acts as the For ring-opening step. Residue His138 is the Proton acceptor; for ring-opening step of the active site. The active-site For ring-opening step is Glu143.

Belongs to the glucosamine/galactosamine-6-phosphate isomerase family. NagB subfamily.

The catalysed reaction is alpha-D-glucosamine 6-phosphate + H2O = beta-D-fructose 6-phosphate + NH4(+). It participates in amino-sugar metabolism; N-acetylneuraminate degradation; D-fructose 6-phosphate from N-acetylneuraminate: step 5/5. In terms of biological role, catalyzes the reversible isomerization-deamination of glucosamine 6-phosphate (GlcN6P) to form fructose 6-phosphate (Fru6P) and ammonium ion. This Cutibacterium acnes (strain DSM 16379 / KPA171202) (Propionibacterium acnes) protein is Glucosamine-6-phosphate deaminase.